The following is a 180-amino-acid chain: Large ribosomal subunit protein uL5 (180 aa).

Belongs to the universal ribosomal protein uL5 family. In terms of assembly, part of the 50S ribosomal subunit; part of the 5S rRNA/L5/L18/L25 subcomplex. Contacts the 5S rRNA and the P site tRNA. Forms a bridge to the 30S subunit in the 70S ribosome.

Functionally, this is one of the proteins that bind and probably mediate the attachment of the 5S RNA into the large ribosomal subunit, where it forms part of the central protuberance. In the 70S ribosome it contacts protein S13 of the 30S subunit (bridge B1b), connecting the 2 subunits; this bridge is implicated in subunit movement. Contacts the P site tRNA; the 5S rRNA and some of its associated proteins might help stabilize positioning of ribosome-bound tRNAs. This is Large ribosomal subunit protein uL5 from Chlamydia caviae (strain ATCC VR-813 / DSM 19441 / 03DC25 / GPIC) (Chlamydophila caviae).